Consider the following 512-residue polypeptide: Probable amidase At4g34880 (512 aa).

Residues Lys-117 and Ser-198 each act as charge relay system in the active site. Ser-222 functions as the Acyl-ester intermediate in the catalytic mechanism.

The protein belongs to the amidase family. Expressed in vasculature of roots, cotyledons, leaves and sepals.

The catalysed reaction is a monocarboxylic acid amide + H2O = a monocarboxylate + NH4(+). In Arabidopsis thaliana (Mouse-ear cress), this protein is Probable amidase At4g34880.